The chain runs to 1589 residues: Centrosomal protein of 170 kDa protein B (1589 aa).

The region spanning 23-73 (IFVGREECELMLQSRSVDKQHAVINYDQDRDEHWVKDLGSLNGTFVNDMRI) is the FHA domain. 4 disordered regions span residues 130 to 261 (RSEA…GAAP), 287 to 309 (ITKF…EMVS), 325 to 388 (LLHR…RLQR), and 409 to 583 (FDED…EVEE). 2 stretches are compositionally biased toward basic and acidic residues: residues 147–156 (RPEKGDRRPG) and 243–253 (PAHEMPTKDAE). Residues 330–344 (GPGDDRHSTKSDLPV) are compositionally biased toward basic and acidic residues. A phosphoserine mark is found at serine 360 and serine 421. Basic and acidic residues-rich tracts occupy residues 430–446 (PKAD…RDRP) and 467–476 (LKREKTEERL). A compositionally biased stretch (low complexity) spans 478-489 (SPSPASRTPARP). 2 positions are modified to phosphoserine: serine 480 and serine 492. Residues 520–530 (EKVPPVLPAPL) are compositionally biased toward pro residues. Residue serine 536 is modified to Phosphoserine. Over residues 538-548 (VGPPTPPPAPT) the composition is skewed to pro residues. A Phosphothreonine modification is found at threonine 542. A phosphoserine mark is found at serine 597, serine 619, serine 655, serine 711, serine 721, serine 746, serine 748, serine 751, serine 753, serine 772, serine 829, serine 853, serine 954, serine 972, serine 986, and serine 988. 4 disordered regions span residues 598-895 (PELS…LQDL), 934-1316 (DAEC…PYGF), 1350-1374 (DGDT…TPAS), and 1532-1552 (AQPG…PASA). Over residues 711–722 (SPAGPESSRRSG) the composition is skewed to low complexity. Residues 957 to 972 (DTASTVSLRSGKSGPS) are compositionally biased toward polar residues. Positions 1029-1038 (SAIRRGHRPR) are enriched in basic residues. A phosphoserine mark is found at serine 1135, serine 1179, and serine 1199. Positions 1221 to 1230 (AANTATTTGP) are enriched in polar residues. Over residues 1286 to 1301 (PRAGSSSRARSRAPGP) the composition is skewed to low complexity. Threonine 1304 carries the phosphothreonine modification. Serine 1356 and serine 1362 each carry phosphoserine. The segment covering 1363–1374 (ASLSNMPSTPAS) has biased composition (polar residues). Residues 1542-1552 (AAQSPPSPASA) are compositionally biased toward low complexity. Phosphoserine is present on residues serine 1545 and serine 1548.

The protein belongs to the CEP170 family.

Its subcellular location is the cytoplasm. It localises to the cytoskeleton. Its function is as follows. Plays a role in microtubule organization. The protein is Centrosomal protein of 170 kDa protein B (CEP170B) of Homo sapiens (Human).